Reading from the N-terminus, the 440-residue chain is Zinc finger MYND domain-containing protein 10 (440 aa).

Residues C394, C397, C405, C408, C414, C418, H426, and C430 each contribute to the Zn(2+) site. Residues 394-430 (CAYCSAEASKRCSRCQKVWYCCRECQVKHWEKHGKTC) form an MYND-type zinc finger.

Belongs to the ZMYND10 family. In terms of assembly, interacts (via C-terminus) with DNAAF11 (via CS domain); this interaction stabilizes DNAAF11 at the protein level. Interacts (via C-terminus) with DNAL1; this interaction stabilizes DNAL1 at the protein level. Interacts with DNAAF4, HSPA8, IQUB, RUVBL2 and DYNTL5.

The protein resides in the cytoplasm. The protein localises to the cytoskeleton. Its subcellular location is the microtubule organizing center. It is found in the centrosome. It localises to the centriolar satellite. The protein resides in the apical cell membrane. The protein localises to the dynein axonemal particle. Plays a role in axonemal structure organization and motility. Involved in axonemal pre-assembly of inner and outer dynein arms (IDA and ODA, respectively) for proper axoneme building for cilia motility. May act by indirectly regulating transcription of dynein proteins. The protein is Zinc finger MYND domain-containing protein 10 (Zmynd10) of Rattus norvegicus (Rat).